The chain runs to 56 residues: Defensin-1 (56 aa).

An N-terminal signal peptide occupies residues 1 to 24; it reads MKAIVVLLILALILCLYAMTTVEG. Cystine bridges form between Cys-26/Cys-45, Cys-31/Cys-53, and Cys-35/Cys-55.

It localises to the secreted. Antibacterial protein involved in the immune response to septic injury. When combined with 14.026 kDa and 14.059 kDa hemolymph antimicrobial peptides, it has a strong cooperative activity against the Gram-positive bacteria B.subtilis and S.aureus, and against the Gram-negative bacteria E.coli DH5-alpha and K.pneumoniae ATCC 138833. Does not show detectable antibacterial activity when present alone. Has no hemolytic activity in human erythrocytes. In Centruroides limpidus (Mexican scorpion), this protein is Defensin-1.